The primary structure comprises 463 residues: Cysteine--tRNA ligase (463 aa).

C28 provides a ligand contact to Zn(2+). The 'HIGH' region signature appears at 30 to 40 (ITPYDLCHIGH). Zn(2+) is bound by residues C211, H236, and E240. The 'KMSKS' region motif lies at 268 to 272 (KMSKS). K271 provides a ligand contact to ATP.

This sequence belongs to the class-I aminoacyl-tRNA synthetase family. In terms of assembly, monomer. Zn(2+) is required as a cofactor.

It is found in the cytoplasm. The catalysed reaction is tRNA(Cys) + L-cysteine + ATP = L-cysteinyl-tRNA(Cys) + AMP + diphosphate. The chain is Cysteine--tRNA ligase from Wigglesworthia glossinidia brevipalpis.